The primary structure comprises 1308 residues: MAGLAQHIQLKYIFGMNNEIRNSLQFHDEDRIIYPAGYNVVLHDLNDKSQHYYQGTNEYRGISCLALSPLKRYLALGVKGQRDPAIIIFDTFTQKRRKNLGLNLGNLDRYNIKQWVSIAFPSQNQETKYIFSLSGAGGDVVLCWWWHEKGKCLGSIDLGAQNDIYEISFNHSDANSICVTGNNFFGIYAKIEGTYVREDNQQKQKPSVQNGENSSAAQLPQPTLNIQVSAGNNNQNPQPEIKLENGNLISNLPADIVEKNFVAHLWMQCESYLVVFVESGEIILCDSRGNFLQIMEQSPRYFIVSRSGMIKIVAAVAYSKGFYVACSESIVLQYHYTQDNDKNPFTCVNQFKLKQFVELKEIEIKSICMNKAEDKLLIGLDNNQIYEIKIKPYHPETVNNDSSEDREVTLINHLNHTGPINSMDICKRKPIIATCSTDKTIKIWDYEKKQIKISWAFNEEAFCLSLHPQGFCVAVGFLDKLRLMNLCIHNSQNTTKNKAYKEISPFKGCKEIKFSNGGQYFAAVNSTSSNHVIQVFKFFTGENPSQLVFKGHTGRVKCIAWSSDDSFLLSCGLDGMILAWKLDQDFQHQQTIVPRIVDIHNKGVNFSGLTLTVDNKTIVAVGNDRHIHQAVINEQQPVDKTDKKLLDINLSCLAFPSSNKLLFAGIQDDARSSGAIRCFIYPLTHGKFTDYQAHDERGVEKMKITNDDRYIITAGKDGCIMVFEIKDKDARGMKLKDGYAKYSEEELITRSDLDDLKSTRDGLIVQINEFSNQNAMIGLNSRDDRIRQLETQIENNSQKRKQMFEQLLKSKTMEEQKLIQEINEIKEQFEQEIQVMDTKYQKEVMSLVEEYENQKRLHEIENNKNNKKKTKLLQEHSQKLQIIDDQYQKLLEEQITQKERVEKQINHLQKEQQEVLMQISEEKETEIKNLNQKNSKDEQAITDQGLKAKSDISITKKKIMQQQQEAQDLKEQKQEYERQKEKLKIQNQELRDKIDGQKKIILERDRTIGEKEKIIYNLKKKAQDLEKFKFVLDHKIKELKRDIVPREDEITKMKQETNNMDQYLKELNAYNNYLGTVVDELYTTQETMKEDIKQQRQQISVQQVKISRFKDDVYSLAQHILDYDKLVDETERLFMKHVNDKEVKRQSVEGDIMMEYRSQKKNLEKLVNMFKKSLQKDNQIHKDDKIRIMKDNVDLIREINTLRKSIKDITKGQQSNIPDQKGQTQHMPLQTPQLSRKSISQPVLPPISKSAMFEGVTQQNEIQKSHTQINPELVEEKQKVLNSLQTDILELQKVYEALNYEKHNLTQA.

WD repeat units lie at residues 57-99, 110-154, 415-454, 504-546, 551-590, 645-689, and 694-733; these read NEYR…RRKN, YNIK…KCLG, NHTG…IKIS, SPFK…NPSQ, GHTG…QHQQ, LLDI…GKFT, and HDER…ARGM. A coiled-coil region spans residues 779–1000; sequence LNSRDDRIRQ…RDKIDGQKKI (222 aa).

It belongs to the CFAP57 family. As to quaternary structure, forms a heterodimer with CFAP57A. Associates with components of the nexin-dynein regulatory complex (N-DRC) and the CFAP184:CFAP263 complex.

The protein localises to the cell projection. It is found in the cilium. In terms of biological role, associates with components of the nexin-dynein regulatory complex (N-DRC), a key regulator of ciliary/flagellar motility, and might act as an inner dynein arm (IDA) hub or linkage. The protein is Cilia- and flagella-associated protein 57 C (CFAP57C) of Tetrahymena thermophila (strain SB210).